The sequence spans 596 residues: Pumilio homolog 12 (596 aa).

One can recognise a PUM-HD domain in the interval L254 to K596. 8 Pumilio repeats span residues E277 to N312, E313 to H348, S349 to S388, A389 to E424, A425 to S460, E461 to E496, Q497 to R532, and E533 to D570.

It localises to the cytoplasm. Its subcellular location is the nucleus. Functionally, sequence-specific RNA-binding protein that regulates translation and mRNA stability by binding the 3'-UTR of target mRNAs. The polypeptide is Pumilio homolog 12 (APUM12) (Arabidopsis thaliana (Mouse-ear cress)).